An 861-amino-acid chain; its full sequence is Bifunctional uridylyltransferase/uridylyl-removing enzyme (861 aa).

A uridylyltransferase region spans residues 1–321 (MKNDNRIIKN…VYHQKQKIIR (321 aa)). Positions 322 to 678 (LDDEFQLSNR…IMPHHSQGGT (357 aa)) are uridylyl-removing. The region spanning 440 to 562 (VDQHTLFVIR…LPHARYLDYL (123 aa)) is the HD domain. ACT domains lie at 679–760 (EVFI…AVSR) and 788–861 (QLFL…KSKY).

This sequence belongs to the GlnD family. It depends on Mg(2+) as a cofactor.

It carries out the reaction [protein-PII]-L-tyrosine + UTP = [protein-PII]-uridylyl-L-tyrosine + diphosphate. The enzyme catalyses [protein-PII]-uridylyl-L-tyrosine + H2O = [protein-PII]-L-tyrosine + UMP + H(+). Uridylyltransferase (UTase) activity is inhibited by glutamine, while glutamine activates uridylyl-removing (UR) activity. Modifies, by uridylylation and deuridylylation, the PII regulatory proteins (GlnB and homologs), in response to the nitrogen status of the cell that GlnD senses through the glutamine level. Under low glutamine levels, catalyzes the conversion of the PII proteins and UTP to PII-UMP and PPi, while under higher glutamine levels, GlnD hydrolyzes PII-UMP to PII and UMP (deuridylylation). Thus, controls uridylylation state and activity of the PII proteins, and plays an important role in the regulation of nitrogen assimilation and metabolism. This chain is Bifunctional uridylyltransferase/uridylyl-removing enzyme, found in Legionella pneumophila (strain Paris).